A 347-amino-acid chain; its full sequence is Phosphoribosylformylglycinamidine cyclo-ligase (347 aa).

It belongs to the AIR synthase family.

It localises to the cytoplasm. The enzyme catalyses 2-formamido-N(1)-(5-O-phospho-beta-D-ribosyl)acetamidine + ATP = 5-amino-1-(5-phospho-beta-D-ribosyl)imidazole + ADP + phosphate + H(+). Its pathway is purine metabolism; IMP biosynthesis via de novo pathway; 5-amino-1-(5-phospho-D-ribosyl)imidazole from N(2)-formyl-N(1)-(5-phospho-D-ribosyl)glycinamide: step 2/2. This is Phosphoribosylformylglycinamidine cyclo-ligase from Yersinia pseudotuberculosis serotype IB (strain PB1/+).